Consider the following 189-residue polypeptide: Ribonuclease HII (189 aa).

The region spanning 1-189 is the RNase H type-2 domain; it reads MIAGVDEAGR…IAALLKNNKK (189 aa). The a divalent metal cation site is built by D6, E7, and D98.

It belongs to the RNase HII family. The cofactor is Mn(2+). Mg(2+) is required as a cofactor.

Its subcellular location is the cytoplasm. The enzyme catalyses Endonucleolytic cleavage to 5'-phosphomonoester.. Functionally, endonuclease that specifically degrades the RNA of RNA-DNA hybrids. The chain is Ribonuclease HII from Dichelobacter nodosus (strain VCS1703A).